Here is a 65-residue protein sequence, read N- to C-terminus: Large ribosomal subunit protein uL29 (65 aa).

Belongs to the universal ribosomal protein uL29 family.

The protein is Large ribosomal subunit protein uL29 of Psychrobacter arcticus (strain DSM 17307 / VKM B-2377 / 273-4).